We begin with the raw amino-acid sequence, 368 residues long: 4-hydroxy-3-methylbut-2-en-1-yl diphosphate synthase (flavodoxin) (368 aa).

[4Fe-4S] cluster-binding residues include Cys268, Cys271, Cys303, and Glu310.

The protein belongs to the IspG family. The cofactor is [4Fe-4S] cluster.

The enzyme catalyses (2E)-4-hydroxy-3-methylbut-2-enyl diphosphate + oxidized [flavodoxin] + H2O + 2 H(+) = 2-C-methyl-D-erythritol 2,4-cyclic diphosphate + reduced [flavodoxin]. Its pathway is isoprenoid biosynthesis; isopentenyl diphosphate biosynthesis via DXP pathway; isopentenyl diphosphate from 1-deoxy-D-xylulose 5-phosphate: step 5/6. Its function is as follows. Converts 2C-methyl-D-erythritol 2,4-cyclodiphosphate (ME-2,4cPP) into 1-hydroxy-2-methyl-2-(E)-butenyl 4-diphosphate. This Listeria monocytogenes serovar 1/2a (strain ATCC BAA-679 / EGD-e) protein is 4-hydroxy-3-methylbut-2-en-1-yl diphosphate synthase (flavodoxin).